Reading from the N-terminus, the 225-residue chain is Peptidyl-tRNA hydrolase (225 aa).

Tyr-14 contacts tRNA. The Proton acceptor role is filled by His-19. TRNA-binding residues include Phe-64, Asn-66, and Asn-112. The disordered stretch occupies residues 184-225 (ALRMQPPKPEKPKPAAKAPEAQAPEAAPDERSALQKLADRFR). Positions 198–209 (AAKAPEAQAPEA) are enriched in low complexity. Positions 211–225 (PDERSALQKLADRFR) are enriched in basic and acidic residues.

It belongs to the PTH family. Monomer.

The protein resides in the cytoplasm. It catalyses the reaction an N-acyl-L-alpha-aminoacyl-tRNA + H2O = an N-acyl-L-amino acid + a tRNA + H(+). Hydrolyzes ribosome-free peptidyl-tRNAs (with 1 or more amino acids incorporated), which drop off the ribosome during protein synthesis, or as a result of ribosome stalling. In terms of biological role, catalyzes the release of premature peptidyl moieties from peptidyl-tRNA molecules trapped in stalled 50S ribosomal subunits, and thus maintains levels of free tRNAs and 50S ribosomes. The polypeptide is Peptidyl-tRNA hydrolase (Cereibacter sphaeroides (strain ATCC 17023 / DSM 158 / JCM 6121 / CCUG 31486 / LMG 2827 / NBRC 12203 / NCIMB 8253 / ATH 2.4.1.) (Rhodobacter sphaeroides)).